We begin with the raw amino-acid sequence, 247 residues long: Ribonuclease 3 (247 aa).

The 129-residue stretch at 21 to 149 folds into the RNase III domain; it reads FKKLSKKIGI…LVGAIYLDRG (129 aa). Glutamate 62 is a Mg(2+) binding site. Aspartate 66 is a catalytic residue. Mg(2+) contacts are provided by asparagine 135 and glutamate 138. Glutamate 138 is a catalytic residue. Residues 176-245 enclose the DRBM domain; that stretch reads DYKTQLQEYS…AKELYIRIRR (70 aa).

Belongs to the ribonuclease III family. In terms of assembly, homodimer. It depends on Mg(2+) as a cofactor.

The protein localises to the cytoplasm. It catalyses the reaction Endonucleolytic cleavage to 5'-phosphomonoester.. Digests double-stranded RNA. Involved in the processing of primary rRNA transcript to yield the immediate precursors to the large and small rRNAs (23S and 16S). Processes some mRNAs, and tRNAs when they are encoded in the rRNA operon. Processes pre-crRNA and tracrRNA of type II CRISPR loci if present in the organism. The polypeptide is Ribonuclease 3 (Leptospira borgpetersenii serovar Hardjo-bovis (strain L550)).